Here is a 354-residue protein sequence, read N- to C-terminus: tRNA dimethylallyltransferase (354 aa).

28–35 (GPTATGKS) is a binding site for ATP. Position 30–35 (30–35 (TATGKS)) interacts with substrate. Residues 53–56 (DSRQ) form an interaction with substrate tRNA region.

It belongs to the IPP transferase family. In terms of assembly, monomer. It depends on Mg(2+) as a cofactor.

The enzyme catalyses adenosine(37) in tRNA + dimethylallyl diphosphate = N(6)-dimethylallyladenosine(37) in tRNA + diphosphate. Functionally, catalyzes the transfer of a dimethylallyl group onto the adenine at position 37 in tRNAs that read codons beginning with uridine, leading to the formation of N6-(dimethylallyl)adenosine (i(6)A). In Synechococcus sp. (strain JA-2-3B'a(2-13)) (Cyanobacteria bacterium Yellowstone B-Prime), this protein is tRNA dimethylallyltransferase.